Here is a 484-residue protein sequence, read N- to C-terminus: Trigger factor (484 aa).

The region spanning G162 to P243 is the PPIase FKBP-type domain. The segment at D427 to G484 is disordered. Residues D444–S476 show a composition bias toward acidic residues.

It belongs to the FKBP-type PPIase family. Tig subfamily.

The protein localises to the cytoplasm. The catalysed reaction is [protein]-peptidylproline (omega=180) = [protein]-peptidylproline (omega=0). Involved in protein export. Acts as a chaperone by maintaining the newly synthesized protein in an open conformation. Functions as a peptidyl-prolyl cis-trans isomerase. This chain is Trigger factor, found in Mycobacterium marinum (strain ATCC BAA-535 / M).